We begin with the raw amino-acid sequence, 149 residues long: Protein SprT-like (149 aa).

In terms of domain architecture, SprT-like spans 6–147; sequence LQALVEQISI…VCGRCRSKLK (142 aa). Histidine 67 contributes to the Zn(2+) binding site. Glutamate 68 is a catalytic residue. Histidine 71 contacts Zn(2+).

Belongs to the SprT family. Requires Zn(2+) as cofactor.

Its subcellular location is the cytoplasm. The polypeptide is Protein SprT-like (Geobacillus kaustophilus (strain HTA426)).